Reading from the N-terminus, the 255-residue chain is 5'-nucleotidase SurE (255 aa).

The a divalent metal cation site is built by aspartate 8, aspartate 9, serine 39, and asparagine 91.

Belongs to the SurE nucleotidase family. Requires a divalent metal cation as cofactor.

It localises to the cytoplasm. The catalysed reaction is a ribonucleoside 5'-phosphate + H2O = a ribonucleoside + phosphate. In terms of biological role, nucleotidase that shows phosphatase activity on nucleoside 5'-monophosphates. This is 5'-nucleotidase SurE from Nitrosospira multiformis (strain ATCC 25196 / NCIMB 11849 / C 71).